Consider the following 146-residue polypeptide: D-aminoacyl-tRNA deacylase (146 aa).

A Gly-cisPro motif, important for rejection of L-amino acids motif is present at residues 137–138; it reads GP.

This sequence belongs to the DTD family. In terms of assembly, homodimer.

It localises to the cytoplasm. The catalysed reaction is glycyl-tRNA(Ala) + H2O = tRNA(Ala) + glycine + H(+). The enzyme catalyses a D-aminoacyl-tRNA + H2O = a tRNA + a D-alpha-amino acid + H(+). An aminoacyl-tRNA editing enzyme that deacylates mischarged D-aminoacyl-tRNAs. Also deacylates mischarged glycyl-tRNA(Ala), protecting cells against glycine mischarging by AlaRS. Acts via tRNA-based rather than protein-based catalysis; rejects L-amino acids rather than detecting D-amino acids in the active site. By recycling D-aminoacyl-tRNA to D-amino acids and free tRNA molecules, this enzyme counteracts the toxicity associated with the formation of D-aminoacyl-tRNA entities in vivo and helps enforce protein L-homochirality. This chain is D-aminoacyl-tRNA deacylase, found in Variovorax paradoxus (strain S110).